The chain runs to 216 residues: Adenylate kinase (216 aa).

10–15 (GAGKGT) is an ATP binding site. An NMP region spans residues 30-59 (STGDMFRAAMKAETEMGLQAKSFIDKGALV). AMP is bound by residues Thr31, Arg36, 57–59 (ALV), 85–88 (GFPR), and Gln92. Residues 126 to 163 (GRRICKECGATYHLEFNPPAKADVCDKCGGELYQRSDD) are LID. ATP is bound at residue Arg127. Zn(2+) is bound by residues Cys130 and Cys133. An ATP-binding site is contributed by 136–137 (TY). Zn(2+)-binding residues include Cys150 and Cys153. AMP is bound by residues Arg160 and Arg171. Residue Gln199 participates in ATP binding.

It belongs to the adenylate kinase family. As to quaternary structure, monomer.

The protein localises to the cytoplasm. The catalysed reaction is AMP + ATP = 2 ADP. Its pathway is purine metabolism; AMP biosynthesis via salvage pathway; AMP from ADP: step 1/1. Its function is as follows. Catalyzes the reversible transfer of the terminal phosphate group between ATP and AMP. Plays an important role in cellular energy homeostasis and in adenine nucleotide metabolism. In Bacillus cereus (strain B4264), this protein is Adenylate kinase.